A 212-amino-acid polypeptide reads, in one-letter code: Ion-translocating oxidoreductase complex subunit G (212 aa).

A helical transmembrane segment spans residues 9 to 29 (GLLLGLFALLCTGLVAIVNQL). Thr176 is modified (FMN phosphoryl threonine).

Belongs to the RnfG family. The complex is composed of six subunits: RnfA, RnfB, RnfC, RnfD, RnfE and RnfG. The cofactor is FMN.

It localises to the cell inner membrane. Part of a membrane-bound complex that couples electron transfer with translocation of ions across the membrane. In Shewanella piezotolerans (strain WP3 / JCM 13877), this protein is Ion-translocating oxidoreductase complex subunit G.